A 264-amino-acid chain; its full sequence is Thymidylate synthase (264 aa).

R21 is a dUMP binding site. H51 provides a ligand contact to (6R)-5,10-methylene-5,6,7,8-tetrahydrofolate. Residue 126–127 (RR) participates in dUMP binding. Catalysis depends on C146, which acts as the Nucleophile. Residues 166–169 (RSAD), N177, and 207–209 (HLY) contribute to the dUMP site. D169 provides a ligand contact to (6R)-5,10-methylene-5,6,7,8-tetrahydrofolate. Residue A263 coordinates (6R)-5,10-methylene-5,6,7,8-tetrahydrofolate.

The protein belongs to the thymidylate synthase family. Bacterial-type ThyA subfamily. Homodimer.

Its subcellular location is the cytoplasm. The enzyme catalyses dUMP + (6R)-5,10-methylene-5,6,7,8-tetrahydrofolate = 7,8-dihydrofolate + dTMP. It participates in pyrimidine metabolism; dTTP biosynthesis. Functionally, catalyzes the reductive methylation of 2'-deoxyuridine-5'-monophosphate (dUMP) to 2'-deoxythymidine-5'-monophosphate (dTMP) while utilizing 5,10-methylenetetrahydrofolate (mTHF) as the methyl donor and reductant in the reaction, yielding dihydrofolate (DHF) as a by-product. This enzymatic reaction provides an intracellular de novo source of dTMP, an essential precursor for DNA biosynthesis. The protein is Thymidylate synthase of Chromobacterium violaceum (strain ATCC 12472 / DSM 30191 / JCM 1249 / CCUG 213 / NBRC 12614 / NCIMB 9131 / NCTC 9757 / MK).